The primary structure comprises 76 residues: Putative antitoxin VapB2 (76 aa).

The protein belongs to the UPF0330 family.

Possibly the antitoxin component of a type II toxin-antitoxin (TA) system. Its cognate toxin is VapC2 (Potential). In Pyrococcus abyssi (strain GE5 / Orsay), this protein is Putative antitoxin VapB2 (vapB2).